The primary structure comprises 320 residues: Foldase protein PrsA (320 aa).

The first 20 residues, Met1–Ala20, serve as a signal peptide directing secretion. Residue Cys21 is the site of N-palmitoyl cysteine attachment. The S-diacylglycerol cysteine moiety is linked to residue Cys21. One can recognise a PpiC domain in the interval Glu139 to Lys245. The tract at residues Glu159–Ala198 is disordered.

The protein belongs to the PrsA family.

Its subcellular location is the cell membrane. The catalysed reaction is [protein]-peptidylproline (omega=180) = [protein]-peptidylproline (omega=0). Plays a major role in protein secretion by helping the post-translocational extracellular folding of several secreted proteins. The sequence is that of Foldase protein PrsA from Staphylococcus aureus (strain bovine RF122 / ET3-1).